A 29-amino-acid chain; its full sequence is Cytochrome b6-f complex subunit 8 (29 aa).

A helical transmembrane segment spans residues 3 to 23 (IVSIAWAALMVVFTFSLSLVV).

Belongs to the PetN family. In terms of assembly, the 4 large subunits of the cytochrome b6-f complex are cytochrome b6, subunit IV (17 kDa polypeptide, PetD), cytochrome f and the Rieske protein, while the 4 small subunits are PetG, PetL, PetM and PetN. The complex functions as a dimer.

It is found in the plastid. It localises to the chloroplast thylakoid membrane. In terms of biological role, component of the cytochrome b6-f complex, which mediates electron transfer between photosystem II (PSII) and photosystem I (PSI), cyclic electron flow around PSI, and state transitions. This Angiopteris evecta (Mule's foot fern) protein is Cytochrome b6-f complex subunit 8.